The chain runs to 38 residues: Phi-Lf prophage-derived putative minor coat protein (38 aa).

This is Phi-Lf prophage-derived putative minor coat protein (gIX-1) from Xanthomonas campestris pv. campestris (strain ATCC 33913 / DSM 3586 / NCPPB 528 / LMG 568 / P 25).